Consider the following 304-residue polypeptide: MTWPHFEQLAFPDLSRHSSHSTTRGVPSVPMDLSSFSDMLRRQAPHLLPFRGDASLTPTDAVPHGTTIVALKFPGGVVMAGDRRATQGNMIASRDVQKVYITDDYTATGIAGTAAIAVEFARLYAVELEHYEKLEGVALTFAGKVNRLATMVRGNLGAALQGFVALPLLAGFDLDDPDPQAAGRIVSFDAAGGHNLEEEGFQSVGSGSIFAKSSMKKLYHQVTDADSALRVAVEALYDAADDDSATGGPDLVRGIFPTAVLITADGAEEVTQERIAGLAREVIQNRSRADTFGPDAHAPRGTDS.

Residues 1–65 constitute a propeptide, removed in mature form; by autocatalysis; that stretch reads MTWPHFEQLA…LTPTDAVPHG (65 aa). Threonine 66 acts as the Nucleophile in catalysis.

This sequence belongs to the peptidase T1B family. As to quaternary structure, the 20S proteasome core is composed of 14 alpha and 14 beta subunits that assemble into four stacked heptameric rings, resulting in a barrel-shaped structure. The two inner rings, each composed of seven catalytic beta subunits, are sandwiched by two outer rings, each composed of seven alpha subunits. The catalytic chamber with the active sites is on the inside of the barrel. Has a gated structure, the ends of the cylinder being occluded by the N-termini of the alpha-subunits. Is capped by the proteasome-associated ATPase, ARC.

It localises to the cytoplasm. The enzyme catalyses Cleavage of peptide bonds with very broad specificity.. The protein operates within protein degradation; proteasomal Pup-dependent pathway. With respect to regulation, the formation of the proteasomal ATPase ARC-20S proteasome complex, likely via the docking of the C-termini of ARC into the intersubunit pockets in the alpha-rings, may trigger opening of the gate for substrate entry. Interconversion between the open-gate and close-gate conformations leads to a dynamic regulation of the 20S proteasome proteolysis activity. Component of the proteasome core, a large protease complex with broad specificity involved in protein degradation. This chain is Proteasome subunit beta, found in Mycobacterium sp. (strain JLS).